A 23-amino-acid chain; its full sequence is Acidic phospholipase A2 Ts-A2 (23 aa).

Ca(2+) is required as a cofactor. In terms of processing, contains 7 disulfide bonds. In terms of tissue distribution, expressed by the venom gland.

Its subcellular location is the secreted. It carries out the reaction a 1,2-diacyl-sn-glycero-3-phosphocholine + H2O = a 1-acyl-sn-glycero-3-phosphocholine + a fatty acid + H(+). Functionally, exhibits moderate hydrolytic activities and prefers the anionic micelles (dPPC with deoxycholate) to the zwitterionic micelles (dPPC with Triton X-100). PLA2 catalyzes the calcium-dependent hydrolysis of the 2-acyl groups in 3-sn-phosphoglycerides. The sequence is that of Acidic phospholipase A2 Ts-A2 from Trimeresurus stejnegeri (Chinese green tree viper).